The primary structure comprises 1032 residues: Probable ATP-dependent RNA helicase DDX46 (1032 aa).

Positions 1-24 are enriched in basic residues; the sequence is MGRESRHYRKRSASRGRSGSRSRS. The segment at 1 to 227 is disordered; the sequence is MGRESRHYRK…TEMEDEELDP (227 aa). The N-myristoyl glycine moiety is linked to residue Gly-2. A compositionally biased stretch (basic and acidic residues) spans 26–49; sequence SPSDKRSKRGDDRRSRSRDRDRRR. 2 stretches are compositionally biased toward basic residues: residues 50–73 and 81–103; these read ERSRSRDKRRSRSRDRKRLRRSRS and ERRRSRSRDRRRSRSRSRGRRSR. Residues 112-200 show a composition bias toward basic and acidic residues; the sequence is KKTENRSRSK…EMKQGKKWSL (89 aa). Residues 152–197 are a coiled coil; the sequence is DQNKLEEEMRKRKERVEKWREEQRKKAMENIGELKKEIEEMKQGKK. Residue Lys-186 forms a Glycyl lysine isopeptide (Lys-Gly) (interchain with G-Cter in SUMO2) linkage. Ser-199 carries the phosphoserine modification. The segment covering 201 to 211 has biased composition (acidic residues); that stretch reads EDDDDDEDDPA. Position 263 is an N6-acetyllysine (Lys-263). At Tyr-294 the chain carries Phosphotyrosine. Phosphoserine is present on residues Ser-295 and Ser-296. Residue Lys-325 forms a Glycyl lysine isopeptide (Lys-Gly) (interchain with G-Cter in SUMO2) linkage. The residue at position 346 (Ser-346) is a Phosphoserine. The short motif at 372–400 is the Q motif element; it reads KSWVQCGISMKILNSLKKHGYEKPTPIQT. In terms of domain architecture, Helicase ATP-binding spans 403–581; sequence IPAIMSGRDL…RRILSKPIEV (179 aa). 416-423 provides a ligand contact to ATP; the sequence is AKTGSGKT. Positions 529-532 match the DEAD box motif; that stretch reads DEAD. The region spanning 592–753 is the Helicase C-terminal domain; the sequence is DVEQQVIVIE…AVPPDLEKLW (162 aa). At Lys-776 the chain carries N6-acetyllysine. A Glycyl lysine isopeptide (Lys-Gly) (interchain with G-Cter in SUMO2) cross-link involves residue Lys-779. Ser-804 carries the post-translational modification Phosphoserine. At Lys-904 the chain carries N6-acetyllysine. Glycyl lysine isopeptide (Lys-Gly) (interchain with G-Cter in SUMO2) cross-links involve residues Lys-908 and Lys-916. Position 929 is a phosphoserine (Ser-929).

Belongs to the DEAD box helicase family. DDX46/PRP5 subfamily. As to quaternary structure, component of the 17S U2 SnRNP complex, a ribonucleoprotein complex that contains small nuclear RNA (snRNA) U2 and a number of specific proteins. Within the 17S U2 SnRNP complex, DDX46 is part of the SF3B subcomplex, which is required for 'A' complex assembly formed by the stable binding of U2 snRNP to the branchpoint sequence in pre-mRNA. Recruited to the 17S U2 SnRNP complex following release of DDX42; DDX42 and DDX46 bind the SF3B subcomplex in a competitive manner.

It localises to the nucleus speckle. It is found in the nucleus. Its subcellular location is the cajal body. It carries out the reaction ATP + H2O = ADP + phosphate + H(+). Component of the 17S U2 SnRNP complex of the spliceosome, a large ribonucleoprotein complex that removes introns from transcribed pre-mRNAs. The 17S U2 SnRNP complex (1) directly participates in early spliceosome assembly and (2) mediates recognition of the intron branch site during pre-mRNA splicing by promoting the selection of the pre-mRNA branch-site adenosine, the nucleophile for the first step of splicing. Within the 17S U2 SnRNP complex, DDX46 plays essential roles during assembly of pre-spliceosome and proofreading of the branch site. This Mus musculus (Mouse) protein is Probable ATP-dependent RNA helicase DDX46 (Ddx46).